Reading from the N-terminus, the 344-residue chain is Lysophosphatidic acid receptor 6 (344 aa).

Residues 1 to 25 (MVSSNGSQCPYDDSFKYTLYGCMFS) are Extracellular-facing. Residue N5 is glycosylated (N-linked (GlcNAc...) asparagine). The helical transmembrane segment at 26–46 (MVFVLGLISNCVAIYIFICAL) threads the bilayer. Residues 47 to 56 (KVRNETTTYM) lie on the Cytoplasmic side of the membrane. A helical membrane pass occupies residues 57-77 (INLAMSDLLFVFTLPFRIFYF). The Extracellular portion of the chain corresponds to 78–90 (ATRNWPFGDLLCK). Cysteines 89 and 168 form a disulfide. A helical transmembrane segment spans residues 91–111 (ISVMLFYTNMYGSILFLTCIS). The Cytoplasmic portion of the chain corresponds to 112–134 (VDRFLAIVYPFKSKTLRTKRNAK). The chain crosses the membrane as a helical span at residues 135–155 (IVCIAVWFTVMGGSAPAVFFQ). The Extracellular segment spans residues 156 to 183 (STHSQGNNTSEACFENFPAATWKTYLSR). Residues N162 and N163 are each glycosylated (N-linked (GlcNAc...) asparagine). Residues 184 to 204 (IVIFIEIVGFFIPLILNVTCS) traverse the membrane as a helical segment. Residues 205 to 230 (SMVLRTLNKPVTLSRSKMNKTKVLKM) lie on the Cytoplasmic side of the membrane. Residues 231-251 (IFVHLVIFCFCFVPYNINLIL) form a helical membrane-spanning segment. Residues 252 to 272 (YSLMRTQTFVNCSVVAAVRTM) lie on the Extracellular side of the membrane. An N-linked (GlcNAc...) asparagine glycan is attached at N262. A helical membrane pass occupies residues 273-293 (YPITLCIAVSNCCFDPIVYYF). The S-palmitoyl cysteine moiety is linked to residue C284. Over 294–344 (TSDTIQNSIKMKNWSVRRSDSRFSEVQGTENFIQHNLQTLKNKIFDNESAI) the chain is Cytoplasmic.

This sequence belongs to the G-protein coupled receptor 1 family. In terms of tissue distribution, ubiquitously expressed. Detected in the hair follicles and skin (at protein level).

The protein resides in the cell membrane. Binds to oleoyl-L-alpha-lysophosphatidic acid (LPA). Intracellular cAMP is involved in the receptor activation. Important for the maintenance of hair growth and texture. The protein is Lysophosphatidic acid receptor 6 (Lpar6) of Mus musculus (Mouse).